The chain runs to 626 residues: Glucoamylase (626 aa).

The first 19 residues, 1 to 19 (MHLVSSLLVVGAAFQAVLG), serve as a signal peptide directing secretion. A propeptide spanning residues 20 to 35 (LPDPLHEKRHSDIIKR) is cleaved from the precursor. N106 carries N-linked (GlcNAc...) asparagine glycosylation. A substrate-binding site is contributed by W155. N206 is a glycosylation site (N-linked (GlcNAc...) asparagine). D211 acts as the Proton acceptor in catalysis. The Proton donor role is filled by E214. N217 carries an N-linked (GlcNAc...) asparagine glycan. A CBM20 domain is found at 520 to 626 (CAADHEVLVT…STATLDDTWR (107 aa)).

This sequence belongs to the glycosyl hydrolase 15 family.

The catalysed reaction is Hydrolysis of terminal (1-&gt;4)-linked alpha-D-glucose residues successively from non-reducing ends of the chains with release of beta-D-glucose.. The sequence is that of Glucoamylase (gla-1) from Neurospora crassa (strain ATCC 24698 / 74-OR23-1A / CBS 708.71 / DSM 1257 / FGSC 987).